The chain runs to 311 residues: Pyrimidine-specific ribonucleoside hydrolase RihA (311 aa).

H240 is an active-site residue.

It belongs to the IUNH family. RihA subfamily.

Hydrolyzes with equal efficiency cytidine or uridine to ribose and cytosine or uracil, respectively. This Escherichia fergusonii (strain ATCC 35469 / DSM 13698 / CCUG 18766 / IAM 14443 / JCM 21226 / LMG 7866 / NBRC 102419 / NCTC 12128 / CDC 0568-73) protein is Pyrimidine-specific ribonucleoside hydrolase RihA.